A 358-amino-acid polypeptide reads, in one-letter code: UDP-N-acetylglucosamine--N-acetylmuramyl-(pentapeptide) pyrophosphoryl-undecaprenol N-acetylglucosamine transferase (358 aa).

UDP-N-acetyl-alpha-D-glucosamine is bound by residues 13-15 (TAG), Arg-166, Ser-196, and Gln-291.

This sequence belongs to the glycosyltransferase 28 family. MurG subfamily.

Its subcellular location is the cell membrane. The catalysed reaction is di-trans,octa-cis-undecaprenyl diphospho-N-acetyl-alpha-D-muramoyl-L-alanyl-D-glutamyl-meso-2,6-diaminopimeloyl-D-alanyl-D-alanine + UDP-N-acetyl-alpha-D-glucosamine = di-trans,octa-cis-undecaprenyl diphospho-[N-acetyl-alpha-D-glucosaminyl-(1-&gt;4)]-N-acetyl-alpha-D-muramoyl-L-alanyl-D-glutamyl-meso-2,6-diaminopimeloyl-D-alanyl-D-alanine + UDP + H(+). It participates in cell wall biogenesis; peptidoglycan biosynthesis. Its function is as follows. Cell wall formation. Catalyzes the transfer of a GlcNAc subunit on undecaprenyl-pyrophosphoryl-MurNAc-pentapeptide (lipid intermediate I) to form undecaprenyl-pyrophosphoryl-MurNAc-(pentapeptide)GlcNAc (lipid intermediate II). The protein is UDP-N-acetylglucosamine--N-acetylmuramyl-(pentapeptide) pyrophosphoryl-undecaprenol N-acetylglucosamine transferase of Clostridium botulinum (strain Alaska E43 / Type E3).